The sequence spans 563 residues: Phospholipase B-like protein F (563 aa).

Positions 1–21 are cleaved as a signal peptide; sequence MKIINSFVFIFVLLFVFNTNA. N-linked (GlcNAc...) asparagine glycosylation is found at Asn-85, Asn-107, Asn-118, Asn-121, Asn-208, Asn-312, and Asn-537.

This sequence belongs to the phospholipase B-like family.

It localises to the secreted. Probable phospholipase. The polypeptide is Phospholipase B-like protein F (plbF) (Dictyostelium discoideum (Social amoeba)).